Reading from the N-terminus, the 326-residue chain is Eukaryotic translation initiation factor 3 subunit I (326 aa).

5 WD repeats span residues 8 to 47 (GHERSITQIKYNREGDLLFSCSKDQKPNVWYSLNGERLGT), 50 to 89 (GHQGAVWCLDVDWESRKLITGAGDMTAKIWDVEYGTVIAS), 145 to 184 (MTESKITSMLWGPLDETIITGHDNGNIAIWDIRKGQKVVD), 188 to 227 (DHSAGINDMQLSKDGTMFVTASKDTTAKLFDSESLMCLKT), and 285 to 326 (GHFG…NIFE).

The protein belongs to the eIF-3 subunit I family. As to quaternary structure, component of the eukaryotic translation initiation factor 3 (eIF-3) complex. The eIF-3 complex interacts with pix.

It localises to the cytoplasm. Functionally, component of the eukaryotic translation initiation factor 3 (eIF-3) complex, which is involved in protein synthesis of a specialized repertoire of mRNAs and, together with other initiation factors, stimulates binding of mRNA and methionyl-tRNAi to the 40S ribosome. The eIF-3 complex specifically targets and initiates translation of a subset of mRNAs involved in cell proliferation. The sequence is that of Eukaryotic translation initiation factor 3 subunit I from Drosophila sechellia (Fruit fly).